Reading from the N-terminus, the 105-residue chain is U-scoloptoxin(05)-Sa2a (105 aa).

The signal sequence occupies residues 1-24; that stretch reads MKEAVKMSCLCIFLFLFLFSLTDA. Positions 79-105 are disordered; that stretch reads HVPESNQKDGKVSTHMSSCNTDGCNAN. A compositionally biased stretch (polar residues) spans 92 to 105; sequence THMSSCNTDGCNAN.

This sequence belongs to the scoloptoxin-05 family. Post-translationally, contains 4 disulfide bonds. In terms of tissue distribution, expressed by the venom gland.

The protein resides in the secreted. This Scolopendra alternans (Florida Keys giant centipede) protein is U-scoloptoxin(05)-Sa2a.